The chain runs to 1203 residues: Probable phospholipid-transporting ATPase 11 (1203 aa).

Over 1 to 71 (MTKCRRRRLH…STKYTLASFI (71 aa)) the chain is Cytoplasmic. Residues 72–93 (PKSLFEQFRRVANFYFLVTGVL) traverse the membrane as a helical segment. Topologically, residues 94-97 (SLTA) are extracellular. Residues 98-120 (LSPYSPISALLPLTFVIAASMVK) traverse the membrane as a helical segment. The Cytoplasmic portion of the chain corresponds to 121-303 (EAIEDWGRKK…SRIERKMDKI (183 aa)). The chain crosses the membrane as a helical span at residues 304-325 (IYLMFGVVFLMSFIGSIVFGIE). Residues 326-363 (TREDRVRNGGRTERWYLRPDNADIFFDPDRAPMAAVYH) lie on the Extracellular side of the membrane. Residues 364-381 (FFTAVMLYSYFIPISLYV) form a helical membrane-spanning segment. At 382-921 (SIEIVKVLQS…HGHWCYSRIS (540 aa)) the chain is on the cytoplasmic side. Residue Asp-429 is the 4-aspartylphosphate intermediate of the active site. Mg(2+)-binding residues include Asp-866 and Asp-870. A helical membrane pass occupies residues 922–941 (SMICYFFYKNITFGVTVFLY). At 942–955 (EAYTSFSAQPAYND) the chain is on the extracellular side. The helical transmembrane segment at 956–975 (WFLSLFNVFFSSLPVIALGV) threads the bilayer. The Cytoplasmic portion of the chain corresponds to 976 to 1005 (FDQDVSARYCYKFPLLYQEGVQNLLFSWKR). The chain crosses the membrane as a helical span at residues 1006–1028 (IIGWMFNGVFTALAIFFLCKESL). Residues 1029 to 1041 (KHQLYNPNGKTAG) are Extracellular-facing. Residues 1042 to 1064 (REILGGTMYTCVVWVVNLQMALA) form a helical membrane-spanning segment. Residues 1065–1070 (ISYFTW) are Cytoplasmic-facing. Residues 1071–1091 (LQHIVIWGSVAFWYIFLMIYG) traverse the membrane as a helical segment. Residues 1092–1108 (AITPSFSTDAYKVFIEA) lie on the Extracellular side of the membrane. A helical membrane pass occupies residues 1109-1133 (LAPAPSYWLTTLFVMFFALIPFFVF). At 1134-1203 (KSVQMRFFPG…DQLNKNFIAF (70 aa)) the chain is on the cytoplasmic side.

Belongs to the cation transport ATPase (P-type) (TC 3.A.3) family. Type IV subfamily.

The protein localises to the membrane. It carries out the reaction ATP + H2O + phospholipidSide 1 = ADP + phosphate + phospholipidSide 2.. Its function is as follows. Involved in transport of phospholipids. This Arabidopsis thaliana (Mouse-ear cress) protein is Probable phospholipid-transporting ATPase 11.